Here is a 444-residue protein sequence, read N- to C-terminus: Phosphoglucosamine mutase (444 aa).

The Phosphoserine intermediate role is filled by Ser-104. Mg(2+)-binding residues include Ser-104, Asp-243, Asp-245, and Asp-247. Position 104 is a phosphoserine (Ser-104).

The protein belongs to the phosphohexose mutase family. Mg(2+) serves as cofactor. Post-translationally, activated by phosphorylation.

The enzyme catalyses alpha-D-glucosamine 1-phosphate = D-glucosamine 6-phosphate. Functionally, catalyzes the conversion of glucosamine-6-phosphate to glucosamine-1-phosphate. This Neisseria meningitidis serogroup B (strain ATCC BAA-335 / MC58) protein is Phosphoglucosamine mutase.